A 130-amino-acid polypeptide reads, in one-letter code: Small ribosomal subunit protein uS11 (130 aa).

This sequence belongs to the universal ribosomal protein uS11 family. As to quaternary structure, part of the 30S ribosomal subunit.

In terms of biological role, located on the platform of the 30S subunit. The protein is Small ribosomal subunit protein uS11 of Ignicoccus hospitalis (strain KIN4/I / DSM 18386 / JCM 14125).